Here is a 724-residue protein sequence, read N- to C-terminus: Putative mediator of RNA polymerase II transcription subunit 1 (724 aa).

Disordered regions lie at residues S33 to N52, Q147 to E167, and H486 to G524. Positions Y140 to K200 form a coiled coil. Composition is skewed to low complexity over residues Q147–P164 and S488–Q510. Positions K511 to G524 are enriched in polar residues.

Belongs to the Mediator complex subunit 1 family. In terms of assembly, component of the Mediator complex.

It localises to the nucleus. Its function is as follows. Component of the Mediator complex, a coactivator involved in the regulated transcription of nearly all RNA polymerase II-dependent genes. Mediator functions as a bridge to convey information from gene-specific regulatory proteins to the basal RNA polymerase II transcription machinery. Mediator is recruited to promoters by direct interactions with regulatory proteins and serves as a scaffold for the assembly of a functional preinitiation complex with RNA polymerase II and the general transcription factors. This chain is Putative mediator of RNA polymerase II transcription subunit 1 (med1), found in Dictyostelium discoideum (Social amoeba).